A 745-amino-acid polypeptide reads, in one-letter code: Eukaryotic translation initiation factor 3 subunit B (745 aa).

An RRM domain is found at 41-129 (DVIVIEGVPV…HRFSVHRFTD (89 aa)). WD repeat units lie at residues 189–230 (EHSR…RFMR), 251–293 (WSHE…RSFP), 303–344 (GQLK…LLEK), and 580–625 (GEHY…LQKH). Residues 644 to 745 (GKDEQKRVRK…IIEETEEVLA (102 aa)) are a coiled coil.

Belongs to the eIF-3 subunit B family. As to quaternary structure, component of the eukaryotic translation initiation factor 3 (eIF-3) complex.

The protein resides in the cytoplasm. RNA-binding component of the eukaryotic translation initiation factor 3 (eIF-3) complex, which is involved in protein synthesis of a specialized repertoire of mRNAs and, together with other initiation factors, stimulates binding of mRNA and methionyl-tRNAi to the 40S ribosome. The eIF-3 complex specifically targets and initiates translation of a subset of mRNAs involved in cell proliferation. This Mycosarcoma maydis (Corn smut fungus) protein is Eukaryotic translation initiation factor 3 subunit B.